The following is a 535-amino-acid chain: uncharacterized protein (535 aa).

The chain crosses the membrane as a helical span at residues 8–24 (LVVFGSLVFFFGLVKYF). Lysine 50 participates in a covalent cross-link: Glycyl lysine isopeptide (Lys-Gly) (interchain with G-Cter in ubiquitin). Residues aspartate 316, aspartate 327, histidine 412, glutamate 452, and glutamate 493 each coordinate Mn(2+).

The protein belongs to the peptidase M24B family. Mn(2+) is required as a cofactor.

It localises to the membrane. This is an uncharacterized protein from Saccharomyces cerevisiae (strain ATCC 204508 / S288c) (Baker's yeast).